The primary structure comprises 193 residues: Ras-like protein 2 (193 aa).

A GTP-binding site is contributed by 12-19; that stretch reads GGGGVGKS. An Effector region motif is present at residues 34–42; it reads YDPTIEDSY. Residues 59-63 and 118-121 each bind GTP; these read DTAGQ and NKCD. Position 190 is a cysteine methyl ester (Cys190). A lipid anchor (S-geranylgeranyl cysteine) is attached at Cys190. A propeptide spans 191 to 193 (removed in mature form); that stretch reads KLL.

Belongs to the small GTPase superfamily. Ras family.

The protein localises to the cell membrane. The catalysed reaction is GTP + H2O = GDP + phosphate + H(+). Ras proteins bind GDP/GTP and possess intrinsic GTPase activity. The chain is Ras-like protein 2 (RAS-2) from Physarum polycephalum (Slime mold).